The following is a 199-amino-acid chain: Twist-related protein (199 aa).

Residues 1-43 are disordered; sequence MQEHQLSRVTSGNKKKYQSFDDESRDEKRMKCDSTDKLESNSN. Positions 25–39 are enriched in basic and acidic residues; sequence RDEKRMKCDSTDKLE. Residues 51–102 enclose the bHLH domain; that stretch reads THRVIANIRERQRTQALNQSFSTLRKIIPTLPSDKLSKIQTLRLAAMYIDFL.

In terms of assembly, efficient DNA binding requires dimerization with another bHLH protein. Homodimer. Expression is seen at the point of medusa formation in the ectodermal and endodermal bud tissues, and in the entocodon which gives rise to all smooth and striated muscle cells. After the subumbrellar plate differentiates from the endoderm, strong expression is detected until the medusa detaches from the gonzoid. Expression is observed in the distal part of the medusa but diminishes in entocodon-derived muscles as the tissues differentiate, with expression disappearing completely after stage 8. In later stages expression is seen in the distal and proximal parts of the bud and depending on state of maturity, in the developing gonadal tissue.

The protein resides in the nucleus. In terms of biological role, probable transcription factor, which may be responsible for the formation of myoepithelial cells in early muscle development in larva and the formation of non-muscle tissues in later bud stages and mesoderm-like structures in the medusa. In Podocoryna carnea (Hydrozoan), this protein is Twist-related protein.